The primary structure comprises 84 residues: NADH-ubiquinone oxidoreductase chain 4L (84 aa).

The next 2 membrane-spanning stretches (helical) occupy residues 19 to 39 (ITLLIAIEILLLTVTLKLIHI) and 50 to 70 (IFSLIIIILAGAESAIGLSIL).

Belongs to the complex I subunit 4L family.

Its subcellular location is the mitochondrion membrane. The enzyme catalyses a ubiquinone + NADH + 5 H(+)(in) = a ubiquinol + NAD(+) + 4 H(+)(out). Its function is as follows. Core subunit of the mitochondrial membrane respiratory chain NADH dehydrogenase (Complex I) that is believed to belong to the minimal assembly required for catalysis. Complex I functions in the transfer of electrons from NADH to the respiratory chain. The immediate electron acceptor for the enzyme is believed to be ubiquinone. In Candida albicans (strain SC5314 / ATCC MYA-2876) (Yeast), this protein is NADH-ubiquinone oxidoreductase chain 4L (NAD4L).